The primary structure comprises 89 residues: Elongation factor 1-beta (89 aa).

It belongs to the EF-1-beta/EF-1-delta family.

Promotes the exchange of GDP for GTP in EF-1-alpha/GDP, thus allowing the regeneration of EF-1-alpha/GTP that could then be used to form the ternary complex EF-1-alpha/GTP/AAtRNA. The chain is Elongation factor 1-beta from Methanococcus maripaludis (strain C6 / ATCC BAA-1332).